The sequence spans 811 residues: Actin filament-associated protein 1-like 2 (811 aa).

2 disordered regions span residues 67–110 and 132–168; these read KEAQ…PPPK and EPYNASFNDDGEAVSSSYESYDEDESNKSKSAMQQHQ. Residues 181–277 enclose the PH 1 domain; the sequence is DAMICAFLWR…WLKVIQDISG (97 aa). The disordered stretch occupies residues 294–326; that stretch reads QRQIHPKAEGTDRHSGASESGSSTDGHPETPEI. The span at 299–309 shows a compositional bias: basic and acidic residues; sequence PKAEGTDRHSG. The region spanning 359 to 453 is the PH 2 domain; it reads ALETSNYLNV…WLGLLLLESG (95 aa). Disordered regions lie at residues 500–532 and 558–631; these read RGQRYQQDDLYDDVDMSDIQGDEPKSEEKGEAE and LGSP…KERV. Composition is skewed to basic and acidic residues over residues 521 to 532, 566 to 577, and 622 to 631; these read DEPKSEEKGEAE, VSGKKDNEESER, and RLEKSNKERV. Positions 642 to 737 form a coiled coil; the sequence is LLGKNRTEAE…KENLRKAELG (96 aa).

As to quaternary structure, interacts with src.

It is found in the cytoplasm. Its function is as follows. May play a role in a signaling cascade by enhancing the kinase activity of src. Contributes to src-regulated transcription activation. This Xenopus laevis (African clawed frog) protein is Actin filament-associated protein 1-like 2 (afap1l2).